Consider the following 214-residue polypeptide: Adenylate kinase (214 aa).

Residue 10-15 (GTGKGT) participates in ATP binding. Residues 30–59 (STGDILRENIQKKNTIGKKIHNILKNGELV) form an NMP region. AMP contacts are provided by residues Thr-31, Arg-36, 57–59 (ELV), 85–88 (GFPR), and Gln-92. Residues 122-159 (GRRVHTPSGRIYNINYNPPREEGKDDLTQEKLTIREDD) form an LID region. ATP-binding positions include Arg-123 and 132–133 (IY). 2 residues coordinate AMP: Arg-156 and Arg-167. Position 200 (Gln-200) interacts with ATP.

Belongs to the adenylate kinase family. As to quaternary structure, monomer.

It is found in the cytoplasm. The catalysed reaction is AMP + ATP = 2 ADP. Its pathway is purine metabolism; AMP biosynthesis via salvage pathway; AMP from ADP: step 1/1. Functionally, catalyzes the reversible transfer of the terminal phosphate group between ATP and AMP. Plays an important role in cellular energy homeostasis and in adenine nucleotide metabolism. The chain is Adenylate kinase from Buchnera aphidicola subsp. Schizaphis graminum (strain Sg).